A 165-amino-acid polypeptide reads, in one-letter code: NADH-quinone oxidoreductase subunit I (165 aa).

4Fe-4S ferredoxin-type domains are found at residues Arg57–Glu86 and Thr96–Ile125. Positions 66, 69, 72, 76, 105, 108, 111, and 115 each coordinate [4Fe-4S] cluster.

This sequence belongs to the complex I 23 kDa subunit family. NDH-1 is composed of 14 different subunits. Subunits NuoA, H, J, K, L, M, N constitute the membrane sector of the complex. Requires [4Fe-4S] cluster as cofactor.

It is found in the cell inner membrane. It carries out the reaction a quinone + NADH + 5 H(+)(in) = a quinol + NAD(+) + 4 H(+)(out). Functionally, NDH-1 shuttles electrons from NADH, via FMN and iron-sulfur (Fe-S) centers, to quinones in the respiratory chain. The immediate electron acceptor for the enzyme in this species is believed to be ubiquinone. Couples the redox reaction to proton translocation (for every two electrons transferred, four hydrogen ions are translocated across the cytoplasmic membrane), and thus conserves the redox energy in a proton gradient. The protein is NADH-quinone oxidoreductase subunit I of Methylibium petroleiphilum (strain ATCC BAA-1232 / LMG 22953 / PM1).